Here is a 203-residue protein sequence, read N- to C-terminus: uncharacterized protein (203 aa).

Residues 117–138 (SSDPKLKQPSNCLNDQTNNDSA) form a disordered region. Residues 124-138 (QPSNCLNDQTNNDSA) are compositionally biased toward polar residues.

The protein resides in the cytoplasm. It is found in the nucleus. This is an uncharacterized protein from Schizosaccharomyces pombe (strain 972 / ATCC 24843) (Fission yeast).